The following is a 332-amino-acid chain: Adenosine receptor A2b (332 aa).

Residues 1–8 are Extracellular-facing; the sequence is MQLETQDA. A helical membrane pass occupies residues 9-33; that stretch reads LYVALELVIAALAVAGNVLVCAAVG. The Cytoplasmic segment spans residues 34 to 43; that stretch reads ASSALQTPTN. The chain crosses the membrane as a helical span at residues 44 to 67; that stretch reads YFLVSLATADVAVGLFAIPFAITI. Topologically, residues 68-78 are extracellular; that stretch reads SLGFCTDFHSC. A disulfide bridge links cysteine 78 with cysteine 171. Residues 79-101 traverse the membrane as a helical segment; sequence LFLACFVLVLTQSSIFSLLAVAV. The Cytoplasmic segment spans residues 102 to 121; sequence DRYLAIRVPLRYKGLVTGTR. Residues 122–144 form a helical membrane-spanning segment; the sequence is ARGIIAVLWVLAFGIGLTPFLGW. Topologically, residues 145–178 are extracellular; sequence NSKDRATSNCTEPGDGITNKSCCPVKCLFENVVP. N-linked (GlcNAc...) asparagine glycosylation is found at asparagine 153 and asparagine 163. Glutamate 174 lines the adenosine pocket. A helical membrane pass occupies residues 179–203; that stretch reads MSYMVYFNFFGCVLPPLLIMMVIYI. Residues 204-235 are Cytoplasmic-facing; sequence KIFMVACKQLQHMELMEHSRTTLQREIHAAKS. The chain crosses the membrane as a helical span at residues 236-259; it reads LAMIVGIFALCWLPVHAINCITLF. Asparagine 254 provides a ligand contact to adenosine. Residues 260 to 267 are Extracellular-facing; the sequence is HPALAKDK. A helical transmembrane segment spans residues 268–291; that stretch reads PKWVMNVAILLSHANSVVNPIVYA. Residues serine 279 and histidine 280 each contribute to the adenosine site. The Cytoplasmic segment spans residues 292–332; that stretch reads YRNRDFRYSFHRIISRYVLCQTDTKGGSGQAGGQSTFSLSL. A lipid anchor (S-palmitoyl cysteine) is attached at cysteine 311.

Belongs to the G-protein coupled receptor 1 family.

Its subcellular location is the cell membrane. Its function is as follows. Receptor for adenosine. The activity of this receptor is mediated by G proteins which activate adenylyl cyclase. In Rattus norvegicus (Rat), this protein is Adenosine receptor A2b (Adora2b).